We begin with the raw amino-acid sequence, 101 residues long: Small ribosomal subunit protein uS14 (101 aa).

This sequence belongs to the universal ribosomal protein uS14 family. As to quaternary structure, part of the 30S ribosomal subunit. Contacts proteins S3 and S10.

Its function is as follows. Binds 16S rRNA, required for the assembly of 30S particles and may also be responsible for determining the conformation of the 16S rRNA at the A site. This chain is Small ribosomal subunit protein uS14, found in Ehrlichia canis (strain Jake).